A 451-amino-acid chain; its full sequence is Enolase (451 aa).

Gln167 contributes to the (2R)-2-phosphoglycerate binding site. Glu209 acts as the Proton donor in catalysis. Residues Asp250, Glu307, and Asp334 each coordinate Mg(2+). (2R)-2-phosphoglycerate contacts are provided by Lys359, Arg388, Ser389, and Lys410. Lys359 functions as the Proton acceptor in the catalytic mechanism.

The protein belongs to the enolase family. Requires Mg(2+) as cofactor.

Its subcellular location is the cytoplasm. It is found in the secreted. The protein resides in the cell surface. The enzyme catalyses (2R)-2-phosphoglycerate = phosphoenolpyruvate + H2O. Its pathway is carbohydrate degradation; glycolysis; pyruvate from D-glyceraldehyde 3-phosphate: step 4/5. Catalyzes the reversible conversion of 2-phosphoglycerate (2-PG) into phosphoenolpyruvate (PEP). It is essential for the degradation of carbohydrates via glycolysis. The protein is Enolase of Mesomycoplasma hyopneumoniae (strain J / ATCC 25934 / NCTC 10110) (Mycoplasma hyopneumoniae).